The chain runs to 801 residues: Cadherin-20 (801 aa).

An N-terminal signal peptide occupies residues Met1 to Ser34. The propeptide occupies Ser35–Arg59. The Extracellular portion of the chain corresponds to Ser60 to Arg619. 5 Cadherin domains span residues Trp61 to Phe165, Leu166 to Phe274, Pro275 to Phe389, Glu390 to Phe494, and Phe494 to Ala610. A glycan (N-linked (GlcNAc...) asparagine) is linked at Asn261. N-linked (GlcNAc...) asparagine glycosylation is found at Asn420, Asn461, and Asn542. Residues Gly620–Leu640 traverse the membrane as a helical segment. Residues Ser641–Trp801 are Cytoplasmic-facing.

The protein resides in the cell membrane. Functionally, cadherins are calcium-dependent cell adhesion proteins. They preferentially interact with themselves in a homophilic manner in connecting cells; cadherins may thus contribute to the sorting of heterogeneous cell types. The protein is Cadherin-20 (Cdh20) of Rattus norvegicus (Rat).